Consider the following 580-residue polypeptide: PTS system fructose-specific EIIB'BC component (580 aa).

2 consecutive PTS EIIB type-2 domains span residues 1-99 (MSSS…QLAA) and 120-215 (IVAI…KALA). The active-site Phosphocysteine intermediate; for EIIB activity is the cysteine 126. Cysteine 126 bears the Phosphocysteine; by EIIA mark. The PTS EIIC type-2 domain occupies 243–580 (AYKHLMTGVS…LKKPVADVIA (338 aa)). The next 9 helical transmembrane spans lie at 254–274 (MLPF…LGGI), 289–309 (LFQI…AGYI), 332–352 (LNAG…GVAA), 369–389 (VLIL…YVFG), 410–430 (SALL…GGPV), 451–471 (AAAM…TWVF), 483–503 (ATAA…PYAA), 509–529 (TIPA…TAGA), and 549–571 (HLLN…LRLL).

The protein resides in the cell inner membrane. It carries out the reaction D-fructose(out) + N(pros)-phospho-L-histidyl-[protein] = D-fructose 1-phosphate(in) + L-histidyl-[protein]. Its function is as follows. The phosphoenolpyruvate-dependent sugar phosphotransferase system (sugar PTS), a major carbohydrate active transport system, catalyzes the phosphorylation of incoming sugar substrates concomitantly with their translocation across the cell membrane. The enzyme II FruAB PTS system is involved in fructose transport. The sequence is that of PTS system fructose-specific EIIB'BC component from Xanthomonas campestris pv. campestris (strain ATCC 33913 / DSM 3586 / NCPPB 528 / LMG 568 / P 25).